The following is a 156-amino-acid chain: Arginine repressor (156 aa).

This sequence belongs to the ArgR family.

It localises to the cytoplasm. It participates in amino-acid biosynthesis; L-arginine biosynthesis [regulation]. Regulates arginine biosynthesis genes. In Aeromonas hydrophila subsp. hydrophila (strain ATCC 7966 / DSM 30187 / BCRC 13018 / CCUG 14551 / JCM 1027 / KCTC 2358 / NCIMB 9240 / NCTC 8049), this protein is Arginine repressor.